A 410-amino-acid chain; its full sequence is Dipeptidase 1 (410 aa).

A signal peptide spans methionine 1 to alanine 16. The Zn(2+) site is built by histidine 36 and aspartate 38. N-linked (GlcNAc...) asparagine glycosylation occurs at asparagine 57. Residues cysteine 87 and cysteine 170 are joined by a disulfide bond. Glutamate 141 is a Zn(2+) binding site. Histidine 168 contributes to the substrate binding site. Zn(2+) contacts are provided by histidine 214 and histidine 235. A disulfide bond links cysteine 242 and cysteine 274. Residues arginine 246 and aspartate 304 each contribute to the substrate site. A lipid anchor (GPI-anchor amidated serine) is attached at serine 384. A propeptide spans glutamate 385–leucine 410 (removed in mature form).

The protein belongs to the metallo-dependent hydrolases superfamily. Peptidase M19 family. Homodimer; disulfide-linked. Zn(2+) is required as a cofactor.

It is found in the apical cell membrane. It localises to the cell projection. The protein localises to the microvillus membrane. The enzyme catalyses an L-aminoacyl-L-amino acid + H2O = 2 an L-alpha-amino acid. It catalyses the reaction leukotriene D4 + H2O = leukotriene E4 + glycine. It carries out the reaction L-cystine-bis-glycine + 2 H2O = L-cystine + 2 glycine. The catalysed reaction is a beta-lactam + H2O = a substituted beta-amino acid. The enzyme catalyses glycyldehydrophenylalanine + H2O = 2,3-didehydrophenylalanine + glycine. Inhibited by L-penicillamine. Beta-lactamase activity is inhibited by cilastatin. Hydrolyzes a wide range of dipeptides including the conversion of leukotriene D4 to leukotriene E4. Hydrolyzes cystinyl-bis-glycine (cys-bis-gly) formed during glutathione degradation. Also possesses beta lactamase activity and hydrolytically inactivates beta-lactam antibiotics. Its function is as follows. Independently of its dipeptidase activity, acts as an adhesion receptor for neutrophil recruitment from bloodstream into inflamed lungs and liver. In Oryctolagus cuniculus (Rabbit), this protein is Dipeptidase 1 (DPEP1).